The primary structure comprises 526 residues: Probable inorganic phosphate transporter 1-3 (526 aa).

Residues 1–21 are Cytoplasmic-facing; the sequence is MADGQLKVLTTLDHARTQWYH. A helical membrane pass occupies residues 22-42; the sequence is FMAIVIAGMGFFTDAYDLFCI. The Extracellular segment spans residues 43–70; that stretch reads SLVSKLLGRIYYTDLAGDNPGSLPPNVS. A helical membrane pass occupies residues 71–91; the sequence is AAVNGVALCGTLAGQLFFGWL. The Cytoplasmic segment spans residues 92-99; the sequence is GDKLGRKS. A helical transmembrane segment spans residues 100–120; it reads VYGFTLVLMVVCSVASGLSFG. At 121–124 the chain is on the extracellular side; that stretch reads RTAK. A helical transmembrane segment spans residues 125–145; it reads GVVATLCFFRFWLGFGIGGDY. Residues 146 to 163 are Cytoplasmic-facing; the sequence is PLSATIMSEYANKRTRGA. A helical membrane pass occupies residues 164–184; it reads FIAAVFAMQGFGILFGAIVAL. Residues 185–211 are Extracellular-facing; the sequence is VVSAGFRNAYPAPSYADGRAASLVPEA. Residues 212 to 232 traverse the membrane as a helical segment; that stretch reads DYVWRIILMFGTVPAALTYYW. The Cytoplasmic segment spans residues 233–294; sequence RMKMPETARY…GLFSRQFVRR (62 aa). A helical membrane pass occupies residues 295–315; that stretch reads HGVHLVATTSTWFLLDIAFYS. Residues 316-349 lie on the Extracellular side of the membrane; it reads QNLFQKDIFSKVGWIPPARTMNAVEEVFRIARAQ. A helical membrane pass occupies residues 350 to 370; the sequence is ALIALCGTIPGYWFTVAFIDV. Topologically, residues 371–373 are cytoplasmic; that stretch reads AGR. Residues 374-394 form a helical membrane-spanning segment; the sequence is FAIQLMGFAMMTVFMLGLAAP. The Extracellular segment spans residues 395–407; sequence YHHWTTPGNHTGF. A helical membrane pass occupies residues 408–428; sequence VVMYGFTFFFANFGPNATTFI. At 429–444 the chain is on the cytoplasmic side; sequence VPAEIYPARLRSTCHG. The chain crosses the membrane as a helical span at residues 445–465; sequence ISAAAGKAGAIVGAFGFLYAA. Topologically, residues 466 to 483 are extracellular; it reads QDPHKPEAGYKPGIGIRN. Residues 484 to 504 form a helical membrane-spanning segment; that stretch reads ALFVLAGTNFLGMLMTLLVPE. The Cytoplasmic portion of the chain corresponds to 505 to 526; the sequence is SKGMSLEEVSKENVADDEEATA.

Belongs to the major facilitator superfamily. Phosphate:H(+) symporter (TC 2.A.1.9) family. Expressed at low levels in roots.

The protein resides in the membrane. In terms of biological role, high-affinity transporter for external inorganic phosphate. The polypeptide is Probable inorganic phosphate transporter 1-3 (PHT1-3) (Oryza sativa subsp. japonica (Rice)).